Consider the following 366-residue polypeptide: Terpene synthase 4 (366 aa).

Positions Asp91–Arg96 match the DDxx(x)D/E motif motif. Residues Asn241–Glu249 carry the NDxxSxxxD/E motif motif.

This sequence belongs to the terpene synthase family.

The enzyme catalyses (2E,6E)-farnesyl diphosphate = (1S,2S,4R)-beta-elemene + diphosphate. Its function is as follows. Terpene synthase that converts its substrate farnesyl diphosphate (FPP) into the sesquiterpenes bicycloelemene, beta-elemene and 2 yet unidentified sesquiterpenes. This is Terpene synthase 4 from Dictyostelium purpureum (Slime mold).